A 171-amino-acid chain; its full sequence is UPF0312 protein MW2606 (171 aa).

The protein belongs to the UPF0312 family.

The protein is UPF0312 protein MW2606 of Staphylococcus aureus (strain MW2).